The chain runs to 149 residues: Putative oligosaccharyltransferase complex subunit CG9662 (149 aa).

Topologically, residues 1–32 (MIETLYNLPFHILVPPNIKVRRFSIPMPSPMA) are cytoplasmic. A helical transmembrane segment spans residues 33-53 (VFSVILFSYFLVTGGIIYDVI). The Extracellular portion of the chain corresponds to 54–83 (VEPPSLGATVDEHGHSRPVAFMPYRVNGQY). The chain crosses the membrane as a helical span at residues 84 to 104 (IMEGLASSFLFTVGGLGFIIM). Residues 105–117 (DQTHTPGKTNLNR) are Cytoplasmic-facing. Residues 118–138 (LLLTAMGFIFILVSFFTTWLF) form a helical membrane-spanning segment. Over 139-149 (MRMKLPSYLQP) the chain is Extracellular.

Belongs to the OSTC family. Component of the oligosaccharyltransferase (OST) complex.

It is found in the membrane. Subunit of the oligosaccharyl transferase (OST) complex that catalyzes the initial transfer of a defined glycan (Glc(3)Man(9)GlcNAc(2) in eukaryotes) from the lipid carrier dolichol-pyrophosphate to an asparagine residue within an Asn-X-Ser/Thr consensus motif in nascent polypeptide chains, the first step in protein N-glycosylation. N-glycosylation occurs cotranslationally and the complex associates with the Sec61 complex at the channel-forming translocon complex that mediates protein translocation across the endoplasmic reticulum (ER). All subunits are required for a maximal enzyme activity. This chain is Putative oligosaccharyltransferase complex subunit CG9662, found in Drosophila melanogaster (Fruit fly).